A 109-amino-acid chain; its full sequence is Homeobox protein E30 (109 aa).

A compositionally biased stretch (basic residues) spans 1–12 (GPRTRRVKRSHN). A disordered region spans residues 1–27 (GPRTRRVKRSHNGKNGSPEEKRPRTAF). The segment at residues 20-79 (EKRPRTAFSAEQLARLKREFAENRYLTERRRQQLSRDLGLTEAQIKIWFQNKRAKIKKAS) is a DNA-binding region (homeobox).

It belongs to the engrailed homeobox family.

Its subcellular location is the nucleus. The sequence is that of Homeobox protein E30 from Apis mellifera (Honeybee).